Reading from the N-terminus, the 351-residue chain is Autoinducer 2 import system permease protein LsrC (351 aa).

9 helical membrane passes run 14-34, 39-59, 70-90, 93-113, 115-135, 155-175, 213-233, 252-272, and 284-304; these read LLAI…YFSL, MIFS…LVML, ITGL…GLVA, LFAL…VTWL, IPAI…MLLL, ILFS…SMAW, MNGV…GFIP, GISL…AFLL, and LPAW…LVFD.

The protein belongs to the binding-protein-dependent transport system permease family. AraH/RbsC subfamily. As to quaternary structure, the complex is composed of two ATP-binding proteins (LsrA), two transmembrane proteins (LsrC and LsrD) and a solute-binding protein (LsrB).

Its subcellular location is the cell inner membrane. Functionally, part of the ABC transporter complex LsrABCD involved in autoinducer 2 (AI-2) import. Probably responsible for the translocation of the substrate across the membrane. In Yersinia pseudotuberculosis serotype IB (strain PB1/+), this protein is Autoinducer 2 import system permease protein LsrC (lsrC).